We begin with the raw amino-acid sequence, 369 residues long: MKKSHLYNRSLLSVTIILLIFSIIMVGSSSVSVGNRIRTDYLSFLKKNFIHSIISILCMIFVFNVPIYKWKKNKNKLILCSIILLLTLNYFGISNHGAKRWINIKIAFIQPSELVKISFSCYLSSYLSEKNKKTSTIQLISIILIVSKLLLSQPDFGTLVILYSSLLFMLFLIGKNFLFLSASSAIFTTIVLSLIYFRSYRAKRLISFLNPWSNYLGDGYQLVHSMLSFGRGKMFGQGIGNSIQKINFLPEPHTDFIISIIGEELGYLGIAMIVISLFFIFFQGMNIGRNALKDFQYFSGFLAYSISLLIIIQSIINIGSSIGILPIKGTTLPIISYGGSSKLITCIKIAILLRIDFETKMNKIQAFRR.

Helical transmembrane passes span 11–31, 48–68, 77–97, 134–151, 154–174, 177–197, 265–285, and 306–326; these read LLSVTIILLIFSIIMVGSSSV, NFIHSIISILCMIFVFNVPIY, LILCSIILLLTLNYFGISNHG, TSTIQLISIILIVSKLLL, PDFGTLVILYSSLLFMLFLIG, FLFLSASSAIFTTIVLSLIYF, LGYLGIAMIVISLFFIFFQGM, and ISLLIIIQSIINIGSSIGILP.

Belongs to the SEDS family. FtsW subfamily.

Its subcellular location is the cell inner membrane. It catalyses the reaction [GlcNAc-(1-&gt;4)-Mur2Ac(oyl-L-Ala-gamma-D-Glu-L-Lys-D-Ala-D-Ala)](n)-di-trans,octa-cis-undecaprenyl diphosphate + beta-D-GlcNAc-(1-&gt;4)-Mur2Ac(oyl-L-Ala-gamma-D-Glu-L-Lys-D-Ala-D-Ala)-di-trans,octa-cis-undecaprenyl diphosphate = [GlcNAc-(1-&gt;4)-Mur2Ac(oyl-L-Ala-gamma-D-Glu-L-Lys-D-Ala-D-Ala)](n+1)-di-trans,octa-cis-undecaprenyl diphosphate + di-trans,octa-cis-undecaprenyl diphosphate + H(+). It functions in the pathway cell wall biogenesis; peptidoglycan biosynthesis. Functionally, peptidoglycan polymerase that is essential for cell division. The protein is Probable peptidoglycan glycosyltransferase FtsW of Riesia pediculicola (strain USDA).